We begin with the raw amino-acid sequence, 417 residues long: NADH-quinone oxidoreductase subunit D 2 (417 aa).

The protein belongs to the complex I 49 kDa subunit family. In terms of assembly, NDH-1 is composed of 14 different subunits. Subunits NuoB, C, D, E, F, and G constitute the peripheral sector of the complex.

The protein localises to the cell membrane. The catalysed reaction is a quinone + NADH + 5 H(+)(in) = a quinol + NAD(+) + 4 H(+)(out). Functionally, NDH-1 shuttles electrons from NADH, via FMN and iron-sulfur (Fe-S) centers, to quinones in the respiratory chain. The immediate electron acceptor for the enzyme in this species is believed to be ubiquinone. Couples the redox reaction to proton translocation (for every two electrons transferred, four hydrogen ions are translocated across the cytoplasmic membrane), and thus conserves the redox energy in a proton gradient. The protein is NADH-quinone oxidoreductase subunit D 2 of Roseiflexus sp. (strain RS-1).